Consider the following 372-residue polypeptide: Aminomethyltransferase (372 aa).

The protein belongs to the GcvT family. The glycine cleavage system is composed of four proteins: P, T, L and H.

It catalyses the reaction N(6)-[(R)-S(8)-aminomethyldihydrolipoyl]-L-lysyl-[protein] + (6S)-5,6,7,8-tetrahydrofolate = N(6)-[(R)-dihydrolipoyl]-L-lysyl-[protein] + (6R)-5,10-methylene-5,6,7,8-tetrahydrofolate + NH4(+). The glycine cleavage system catalyzes the degradation of glycine. The sequence is that of Aminomethyltransferase from Burkholderia mallei (strain NCTC 10247).